A 552-amino-acid polypeptide reads, in one-letter code: B-cell linker protein (552 aa).

Residues 50-431 (TGKDTWDRLK…SSISSISSTA (382 aa)) are disordered. Basic and acidic residues predominate over residues 67–76 (PRRDYASEHA). Residues 77-93 (DNEEEQWSDDFDSDYEN) show a composition bias toward acidic residues. Residues Tyr-91, Tyr-103, Tyr-115, Tyr-194, Tyr-205, and Tyr-249 each carry the phosphotyrosine; by SYK modification. The segment covering 188 to 205 (SDDEDNYIVPVDNDDDNY) has biased composition (acidic residues). Composition is skewed to basic and acidic residues over residues 277–295 (NAEH…KLDA), 309–322 (PKTD…DENH), and 368–382 (NEDK…RGSS). One can recognise an SH2 domain in the interval 442-549 (WYAATCDRKT…KDSTKLKYIV (108 aa)).

Associates with PLCG1, VAV1 and NCK1 in a B-cell antigen receptor-dependent fashion. Interacts through its SH2 domain with CD79A. Interacts with VAV3, PLCG2 and GRB2. In terms of processing, following BCR activation, phosphorylated on tyrosine residues by SYK and LYN. When phosphorylated, serves as a scaffold to assemble downstream targets of antigen activation, including PLCG1, VAV1, GRB2 and NCK1. Phosphorylation is required for both Ca(2+) and MAPK signaling pathways. Phosphorylation of Tyr-103, Tyr-194 and Tyr-205 facilitates PLCG1 binding. Phosphorylation of Tyr-115 facilitates BTK binding. Phosphorylation of Tyr-91 facilitates VAV1 and NCK1 binding. Highly expressed in the bursa, very low expression in ovary and spleen. Expression was variable among B-cell lines. Highly expressed in immature B-cell lines such as DT40 and CL18, low expression was seen in relatively mature B-cell lines, such as 293B9 and 249L4. No expression was seen in T-cell lines.

Its subcellular location is the cytoplasm. It is found in the cell membrane. Functions as a central linker protein, downstream of the B-cell receptor (BCR), bridging the SYK kinase to a multitude of signaling pathways and regulating biological outcomes of B-cell function and development. Plays a role in the activation of ERK/EPHB2, MAP kinase p38 and JNK. Modulates AP1 activation. Important for the activation of NF-kappa-B and NFAT. Plays an important role in BCR-mediated PLCG1 and PLCG2 activation and Ca(2+) mobilization and is required for trafficking of the BCR to late endosomes. However, does not seem to be required for pre-BCR-mediated activation of MAP kinase and phosphatidyl-inositol 3 (PI3) kinase signaling. May be required for the RAC1-JNK pathway. Plays a critical role in orchestrating the pro-B cell to pre-B cell transition. Plays a critical role in B-cell development in the bursa. Plays an important role in BCR-induced apoptosis. In Gallus gallus (Chicken), this protein is B-cell linker protein (BLNK).